Consider the following 512-residue polypeptide: Bifunctional NAD(P)H-hydrate repair enzyme Nnr (512 aa).

The segment at 1–220 (MPIVAYDPDK…GVPPRLVLPQ (220 aa)) is NAD(P)H-hydrate epimerase. Residues 11 to 218 (VREADRAAVR…PIGVPPRLVL (208 aa)) enclose the YjeF N-terminal domain. The NADPHX 1; for epimerase activity stretch occupies residues 58-62 (NNGGD). The K(+) site is built by N59 and D127. Residues 131 to 137 (GTGSGGE) are NADPHX 1; for epimerase activity. D161 contributes to the (6S)-NADPHX binding site. T164 lines the K(+) pocket. Residues 228–509 (GYEDLSHMRL…HQAALVLGGL (282 aa)) enclose the YjeF C-terminal domain. An ADP-dependent (S)-NAD(P)H-hydrate dehydratase region spans residues 228–512 (GYEDLSHMRL…ALVLGGLGDV (285 aa)). Residue G335 participates in (6S)-NADPHX binding. Positions 385–391 (HEGEAAC) are NADPHX 2; for dehydratase activity. ADP is bound by residues 421–425 (KGRNS) and 440–449 (HPNLSVPGSG). D450 provides a ligand contact to (6S)-NADPHX.

In the N-terminal section; belongs to the NnrE/AIBP family. It in the C-terminal section; belongs to the NnrD/CARKD family. The cofactor is K(+).

It catalyses the reaction (6S)-NADHX + ADP = AMP + phosphate + NADH + H(+). It carries out the reaction (6S)-NADPHX + ADP = AMP + phosphate + NADPH + H(+). The catalysed reaction is (6R)-NADHX = (6S)-NADHX. The enzyme catalyses (6R)-NADPHX = (6S)-NADPHX. Its function is as follows. Bifunctional enzyme that catalyzes the epimerization of the S- and R-forms of NAD(P)HX and the dehydration of the S-form of NAD(P)HX at the expense of ADP, which is converted to AMP. This allows the repair of both epimers of NAD(P)HX, a damaged form of NAD(P)H that is a result of enzymatic or heat-dependent hydration. The chain is Bifunctional NAD(P)H-hydrate repair enzyme Nnr (nnr) from Thermanaerovibrio acidaminovorans (strain ATCC 49978 / DSM 6589 / Su883) (Selenomonas acidaminovorans).